Consider the following 180-residue polypeptide: Cytochrome b6-f complex iron-sulfur subunit 2 (180 aa).

A helical membrane pass occupies residues 21-43; sequence LLTFGTITGVAAGALYPAVKYLI. The Rieske domain maps to 66–162; that stretch reads VTEFLASHNA…ATVTDDDKLV (97 aa). [2Fe-2S] cluster contacts are provided by Cys-108, His-110, Cys-126, and His-129. Cys-113 and Cys-128 are joined by a disulfide.

Belongs to the Rieske iron-sulfur protein family. The 4 large subunits of the cytochrome b6-f complex are cytochrome b6, subunit IV (17 kDa polypeptide, PetD), cytochrome f and the Rieske protein, while the 4 small subunits are PetG, PetL, PetM and PetN. The complex functions as a dimer. [2Fe-2S] cluster serves as cofactor.

The protein resides in the cellular thylakoid membrane. The catalysed reaction is 2 oxidized [plastocyanin] + a plastoquinol + 2 H(+)(in) = 2 reduced [plastocyanin] + a plastoquinone + 4 H(+)(out). In terms of biological role, component of the cytochrome b6-f complex, which mediates electron transfer between photosystem II (PSII) and photosystem I (PSI), cyclic electron flow around PSI, and state transitions. The chain is Cytochrome b6-f complex iron-sulfur subunit 2 from Synechocystis sp. (strain ATCC 27184 / PCC 6803 / Kazusa).